A 145-amino-acid chain; its full sequence is UPF0179 protein Maeo_1037 (145 aa).

The protein belongs to the UPF0179 family.

The polypeptide is UPF0179 protein Maeo_1037 (Methanococcus aeolicus (strain ATCC BAA-1280 / DSM 17508 / OCM 812 / Nankai-3)).